Consider the following 236-residue polypeptide: 15,16-dihydrobiliverdin:ferredoxin oxidoreductase (236 aa).

Belongs to the HY2 family.

The catalysed reaction is 15,16-dihydrobiliverdin + oxidized 2[4Fe-4S]-[ferredoxin] = biliverdin IXalpha + reduced 2[4Fe-4S]-[ferredoxin] + 2 H(+). Its function is as follows. Catalyzes the two-electron reduction of biliverdin IX-alpha at the C15 methine bridge. The protein is 15,16-dihydrobiliverdin:ferredoxin oxidoreductase of Prochlorococcus marinus (strain MIT 9515).